We begin with the raw amino-acid sequence, 154 residues long: Catabolic 3-dehydroquinase (154 aa).

Catalysis depends on Tyr25, which acts as the Proton acceptor. Positions 79, 85, and 92 each coordinate substrate. His105 acts as the Proton donor in catalysis. Substrate is bound by residues 106–107 and Arg116; that span reads IS.

This sequence belongs to the type-II 3-dehydroquinase family. In terms of assembly, homododecamer. Adopts a ring-like structure, composed of an arrangement of two hexameric rings stacked on top of one another.

It catalyses the reaction 3-dehydroquinate = 3-dehydroshikimate + H2O. Its pathway is aromatic compound metabolism; 3,4-dihydroxybenzoate biosynthesis; 3,4-dihydroxybenzoate from 3-dehydroquinate: step 1/2. In terms of biological role, is involved in the catabolism of quinate. Allows the utilization of quinate as carbon source via the beta-ketoadipate pathway. In Botryotinia fuckeliana (strain B05.10) (Noble rot fungus), this protein is Catabolic 3-dehydroquinase.